The sequence spans 96 residues: Phosphoribosyl-ATP pyrophosphatase (96 aa).

The protein belongs to the PRA-PH family.

It localises to the cytoplasm. The catalysed reaction is 1-(5-phospho-beta-D-ribosyl)-ATP + H2O = 1-(5-phospho-beta-D-ribosyl)-5'-AMP + diphosphate + H(+). It participates in amino-acid biosynthesis; L-histidine biosynthesis; L-histidine from 5-phospho-alpha-D-ribose 1-diphosphate: step 2/9. The protein is Phosphoribosyl-ATP pyrophosphatase of Methanococcus maripaludis (strain C5 / ATCC BAA-1333).